Reading from the N-terminus, the 284-residue chain is Bifunctional protein FolD (284 aa).

NADP(+) is bound by residues 166–168 and Ser-191; that span reads GRS.

Belongs to the tetrahydrofolate dehydrogenase/cyclohydrolase family. Homodimer.

It catalyses the reaction (6R)-5,10-methylene-5,6,7,8-tetrahydrofolate + NADP(+) = (6R)-5,10-methenyltetrahydrofolate + NADPH. The catalysed reaction is (6R)-5,10-methenyltetrahydrofolate + H2O = (6R)-10-formyltetrahydrofolate + H(+). It participates in one-carbon metabolism; tetrahydrofolate interconversion. Functionally, catalyzes the oxidation of 5,10-methylenetetrahydrofolate to 5,10-methenyltetrahydrofolate and then the hydrolysis of 5,10-methenyltetrahydrofolate to 10-formyltetrahydrofolate. In Leptospira interrogans serogroup Icterohaemorrhagiae serovar copenhageni (strain Fiocruz L1-130), this protein is Bifunctional protein FolD.